The sequence spans 94 residues: ESAT-6-like protein EsxL (94 aa).

This sequence belongs to the WXG100 family. ESAT-6 subfamily. As to quaternary structure, strongly interacts with EsxK to form a heterodimeric complex under reducing conditions.

The protein localises to the secreted. The sequence is that of ESAT-6-like protein EsxL from Mycobacterium bovis (strain ATCC BAA-935 / AF2122/97).